The chain runs to 99 residues: Ribosomal processing cysteine protease Prp (99 aa).

The active-site Proton donor is the H16. C28 serves as the catalytic Nucleophile.

Belongs to the Prp family. Homodimer.

Functionally, an essential cysteine protease that cleaves the N-terminus from ribosomal protein bL27. In Mycoplasma genitalium (strain ATCC 33530 / DSM 19775 / NCTC 10195 / G37) (Mycoplasmoides genitalium), this protein is Ribosomal processing cysteine protease Prp.